Consider the following 153-residue polypeptide: Ribosome maturation factor RimP (153 aa).

The protein belongs to the RimP family.

Its subcellular location is the cytoplasm. In terms of biological role, required for maturation of 30S ribosomal subunits. The sequence is that of Ribosome maturation factor RimP from Glaesserella parasuis serovar 5 (strain SH0165) (Haemophilus parasuis).